We begin with the raw amino-acid sequence, 374 residues long: Eukaryotic translation initiation factor 3 subunit M (374 aa).

Residue serine 2 is modified to N-acetylserine. Phosphoserine is present on residues serine 2 and serine 152. Positions 180–339 (AASKVMVELL…RKVVVSHSTH (160 aa)) constitute a PCI domain. Position 254 is an N6-acetyllysine (lysine 254). Residue serine 367 is modified to Phosphoserine.

This sequence belongs to the eIF-3 subunit M family. Component of the eukaryotic translation initiation factor 3 (eIF-3) complex, which is composed of 13 subunits: EIF3A, EIF3B, EIF3C, EIF3D, EIF3E, EIF3F, EIF3G, EIF3H, EIF3I, EIF3J, EIF3K, EIF3L and EIF3M. The eIF-3 complex appears to include 3 stable modules: module A is composed of EIF3A, EIF3B, EIF3G and EIF3I; module B is composed of EIF3F, EIF3H, and EIF3M; and module C is composed of EIF3C, EIF3D, EIF3E, EIF3K and EIF3L. EIF3C of module C binds EIF3B of module A and EIF3H of module B, thereby linking the three modules. EIF3J is a labile subunit that binds to the eIF-3 complex via EIF3B. The eIF-3 complex interacts with RPS6KB1 under conditions of nutrient depletion. Mitogenic stimulation leads to binding and activation of a complex composed of MTOR and RPTOR, leading to phosphorylation and release of RPS6KB1 and binding of EIF4B to eIF-3.

The protein resides in the cytoplasm. Component of the eukaryotic translation initiation factor 3 (eIF-3) complex, which is required for several steps in the initiation of protein synthesis. The eIF-3 complex associates with the 40S ribosome and facilitates the recruitment of eIF-1, eIF-1A, eIF-2:GTP:methionyl-tRNAi and eIF-5 to form the 43S pre-initiation complex (43S PIC). The eIF-3 complex stimulates mRNA recruitment to the 43S PIC and scanning of the mRNA for AUG recognition. The eIF-3 complex is also required for disassembly and recycling of post-termination ribosomal complexes and subsequently prevents premature joining of the 40S and 60S ribosomal subunits prior to initiation. The eIF-3 complex specifically targets and initiates translation of a subset of mRNAs involved in cell proliferation, including cell cycling, differentiation and apoptosis, and uses different modes of RNA stem-loop binding to exert either translational activation or repression. The polypeptide is Eukaryotic translation initiation factor 3 subunit M (Eif3m) (Mus musculus (Mouse)).